The chain runs to 195 residues: Cysteine/O-acetylserine efflux protein (195 aa).

The Periplasmic portion of the chain corresponds to 1-7 (MTPTLLS). The chain crosses the membrane as a helical span at residues 8-28 (AFWTYTLITAMTPGPNNILAL). Over 29–46 (SSATSHGFRQSTRVLAGM) the chain is Cytoplasmic. Residues 47 to 67 (SLGFLIVMLLCAGISFSLAVI) form a helical membrane-spanning segment. The Periplasmic segment spans residues 68–69 (DP). Residues 70-90 (AAVHLLSWAGAAYIVWLAWKI) form a helical membrane-spanning segment. At 91-104 (ATSPTKEDGLQAKP) the chain is on the cytoplasmic side. A helical membrane pass occupies residues 105–125 (ISFWASFALQFVNVKIILYGV). Residues 126-141 (TALSTFVLPQTQALSW) are Periplasmic-facing. A helical membrane pass occupies residues 142 to 162 (VVGVSVLLAMIGTFGNVCWAL). Residues 163–176 (AGHLFQRLFRQYGR) are Cytoplasmic-facing. The chain crosses the membrane as a helical span at residues 177–194 (QLNIVLALLLVYCAVRIF). Position 195 (Tyr195) is a topological domain, periplasmic.

Belongs to the Rht family.

The protein resides in the cell inner membrane. The catalysed reaction is O-acetyl-L-serine(in) = O-acetyl-L-serine(out). The enzyme catalyses L-cysteine(in) = L-cysteine(out). Functionally, exporter of O-acetylserine (OAS) and cysteine. The polypeptide is Cysteine/O-acetylserine efflux protein (eamB) (Escherichia coli O9:H4 (strain HS)).